Consider the following 407-residue polypeptide: uncharacterized protein (407 aa).

Disordered regions lie at residues 73 to 93 and 116 to 202; these read SPHS…VHGG and SGSI…IKPS. 5 tandem repeats follow at residues 112 to 116, 117 to 121, 122 to 126, 127 to 131, and 132 to 136. Positions 112–136 are 5 X 5 AA tandem repeats of G-[S]-[IV]-R-[DNS]; the sequence is GSIRSGSIRSGSIRNGSIRSGSVRD. Over residues 116–132 the composition is skewed to low complexity; the sequence is SGSIRSGSIRNGSIRSG. Residues 187-202 are compositionally biased toward basic and acidic residues; sequence NHYAESEYSEKSIKPS.

It belongs to the asfivirus B407L family.

This is an uncharacterized protein from Ornithodoros (relapsing fever ticks).